We begin with the raw amino-acid sequence, 294 residues long: Cytidine deaminase (294 aa).

2 consecutive CMP/dCMP-type deaminase domains span residues 48–168 (DEDA…FGPK) and 186–294 (LTGD…VLLA). 89-91 (NME) lines the substrate pocket. H102 provides a ligand contact to Zn(2+). Residue E104 is the Proton donor of the active site. Positions 129 and 132 each coordinate Zn(2+).

It belongs to the cytidine and deoxycytidylate deaminase family. Homodimer. Zn(2+) serves as cofactor.

The enzyme catalyses cytidine + H2O + H(+) = uridine + NH4(+). It catalyses the reaction 2'-deoxycytidine + H2O + H(+) = 2'-deoxyuridine + NH4(+). Its function is as follows. This enzyme scavenges exogenous and endogenous cytidine and 2'-deoxycytidine for UMP synthesis. The sequence is that of Cytidine deaminase from Escherichia coli (strain ATCC 8739 / DSM 1576 / NBRC 3972 / NCIMB 8545 / WDCM 00012 / Crooks).